Here is a 209-residue protein sequence, read N- to C-terminus: Small ribosomal subunit protein uS4 (209 aa).

The tract at residues 22-45 (RGRNPLLRKPNPPGQHGMQRKKKS) is disordered. An S4 RNA-binding domain is found at 93–154 (CRLDNIVYRL…KSKRLAIVTE (62 aa)).

It belongs to the universal ribosomal protein uS4 family. As to quaternary structure, part of the 30S ribosomal subunit. Contacts protein S5. The interaction surface between S4 and S5 is involved in control of translational fidelity.

Its function is as follows. One of the primary rRNA binding proteins, it binds directly to 16S rRNA where it nucleates assembly of the body of the 30S subunit. Functionally, with S5 and S12 plays an important role in translational accuracy. This chain is Small ribosomal subunit protein uS4, found in Chlamydia trachomatis serovar A (strain ATCC VR-571B / DSM 19440 / HAR-13).